The following is a 29-amino-acid chain: Dermaseptin-1 (29 aa).

V29 is subject to Valine amide.

As to expression, expressed by the skin glands.

The protein resides in the secreted. Antimicrobial peptide, active against the Gram-positive bacterium S.aureus, the Gram-negative bacteria E.coli and P.aeruginosa, and the yeasts C.albicans and P.brasiliensis. Has hemolytic activity (40% hemolysis at 128 ug/ml). The sequence is that of Dermaseptin-1 from Phyllomedusa tarsius (Brownbelly leaf frog).